A 238-amino-acid chain; its full sequence is Ubiquinone biosynthesis O-methyltransferase (238 aa).

S-adenosyl-L-methionine-binding residues include Arg-40, Gly-59, Asp-80, and Met-125.

It belongs to the methyltransferase superfamily. UbiG/COQ3 family.

It carries out the reaction a 3-demethylubiquinol + S-adenosyl-L-methionine = a ubiquinol + S-adenosyl-L-homocysteine + H(+). The enzyme catalyses a 3-(all-trans-polyprenyl)benzene-1,2-diol + S-adenosyl-L-methionine = a 2-methoxy-6-(all-trans-polyprenyl)phenol + S-adenosyl-L-homocysteine + H(+). It participates in cofactor biosynthesis; ubiquinone biosynthesis. In terms of biological role, O-methyltransferase that catalyzes the 2 O-methylation steps in the ubiquinone biosynthetic pathway. The sequence is that of Ubiquinone biosynthesis O-methyltransferase from Paracidovorax citrulli (strain AAC00-1) (Acidovorax citrulli).